The following is a 114-amino-acid chain: Ribosome-binding factor A (114 aa).

Belongs to the RbfA family. As to quaternary structure, monomer. Binds 30S ribosomal subunits, but not 50S ribosomal subunits or 70S ribosomes.

Its subcellular location is the cytoplasm. Its function is as follows. One of several proteins that assist in the late maturation steps of the functional core of the 30S ribosomal subunit. Associates with free 30S ribosomal subunits (but not with 30S subunits that are part of 70S ribosomes or polysomes). Required for efficient processing of 16S rRNA. May interact with the 5'-terminal helix region of 16S rRNA. The chain is Ribosome-binding factor A from Listeria monocytogenes serotype 4b (strain F2365).